The primary structure comprises 181 residues: Bifunctional protein PyrR (181 aa).

Residues 41–42 (TR), 105–113 (DDVLYTGRT), arginine 138, and valine 162 contribute to the substrate site. The PRPP-binding signature appears at 101-113 (VILVDDVLYTGRT).

The protein belongs to the purine/pyrimidine phosphoribosyltransferase family. PyrR subfamily. As to quaternary structure, homodimer and homohexamer; in equilibrium.

It catalyses the reaction UMP + diphosphate = 5-phospho-alpha-D-ribose 1-diphosphate + uracil. In terms of biological role, regulates transcriptional attenuation of the pyrimidine nucleotide (pyr) operon by binding in a uridine-dependent manner to specific sites on pyr mRNA. This disrupts an antiterminator hairpin in the RNA and favors formation of a downstream transcription terminator, leading to a reduced expression of downstream genes. Its function is as follows. Also displays a weak uracil phosphoribosyltransferase activity which is not physiologically significant. In Bacillus subtilis (strain 168), this protein is Bifunctional protein PyrR (pyrR).